Here is a 100-residue protein sequence, read N- to C-terminus: UPF0213 protein FN1575 (100 aa).

One can recognise a GIY-YIG domain in the interval 1–77 (MAYYLYMLRC…KYIKKKKENI (77 aa)).

It belongs to the UPF0213 family.

The chain is UPF0213 protein FN1575 from Fusobacterium nucleatum subsp. nucleatum (strain ATCC 25586 / DSM 15643 / BCRC 10681 / CIP 101130 / JCM 8532 / KCTC 2640 / LMG 13131 / VPI 4355).